We begin with the raw amino-acid sequence, 353 residues long: NADH-quinone oxidoreductase subunit H (353 aa).

9 consecutive transmembrane segments (helical) span residues 8–28, 75–95, 108–128, 148–168, 178–198, 229–249, 258–278, 297–317, and 319–339; these read LLVY…LFIW, GVFW…FAAI, IGIL…FMAG, VSYE…TGSL, SVPF…AAMA, LFYL…TTLF, LHPV…IIWV, FLLP…LAAP, and MNTA…ILLF.

This sequence belongs to the complex I subunit 1 family. As to quaternary structure, NDH-1 is composed of 14 different subunits. Subunits NuoA, H, J, K, L, M, N constitute the membrane sector of the complex.

It localises to the cell membrane. It catalyses the reaction a quinone + NADH + 5 H(+)(in) = a quinol + NAD(+) + 4 H(+)(out). Functionally, NDH-1 shuttles electrons from NADH, via FMN and iron-sulfur (Fe-S) centers, to quinones in the respiratory chain. The immediate electron acceptor for the enzyme in this species is believed to be ubiquinone. Couples the redox reaction to proton translocation (for every two electrons transferred, four hydrogen ions are translocated across the cytoplasmic membrane), and thus conserves the redox energy in a proton gradient. This subunit may bind ubiquinone. This is NADH-quinone oxidoreductase subunit H from Dehalococcoides mccartyi (strain ATCC BAA-2266 / KCTC 15142 / 195) (Dehalococcoides ethenogenes (strain 195)).